Consider the following 402-residue polypeptide: uncharacterized protein (402 aa).

12 consecutive transmembrane segments (helical) span residues 23-43 (IVSV…PLAV), 52-72 (LGYG…ATLL), 90-110 (VLYG…SVAI), 121-141 (LLVG…AAIG), 158-178 (WNGI…VLLV), 180-200 (WLGL…GFAL), 228-248 (GMGL…ITLY), 255-275 (ANAV…RLLF), 282-302 (LGGF…LLLL), 309-329 (WVGL…FPAF), 351-371 (LFVD…ANLF), and 375-395 (SMFL…VALH).

This sequence belongs to the major facilitator superfamily. YhhS family.

Its subcellular location is the cell inner membrane. This is an uncharacterized protein from Pseudomonas aeruginosa (strain ATCC 15692 / DSM 22644 / CIP 104116 / JCM 14847 / LMG 12228 / 1C / PRS 101 / PAO1).